The chain runs to 1033 residues: Integrin alpha-IIb (1033 aa).

The first 31 residues, 1–31 (MARASCAWHSLWLLQWTPLFLGPSAVPPVWA), serve as a signal peptide directing secretion. Over 32-988 (LNLDSEKFSV…TQLLRALEER (957 aa)) the chain is Extracellular. FG-GAP repeat units follow at residues 35 to 96 (DSEK…GGKC), 109 to 173 (NLGF…GRAE), 184 to 237 (SVYA…ISSY), 252 to 304 (TYDN…DSYY), 305 to 370 (QPLH…PQAL), 372 to 431 (TPTL…GLSP), and 434 to 495 (SQVL…VQDS). N-linked (GlcNAc...) asparagine glycosylation is found at Asn-46 and Asn-75. Intrachain disulfides connect Cys-87-Cys-96, Cys-138-Cys-161, and Cys-177-Cys-197. The Ca(2+) site is built by Glu-273, Asp-275, Asp-277, Thr-280, Glu-282, Asp-327, Asn-329, Asp-331, Arg-333, Asp-335, Asp-395, Asp-399, Tyr-401, Asp-403, Asp-456, Asp-458, Asn-460, Tyr-462, and Asp-464. 2 disulfide bridges follow: Cys-503–Cys-514 and Cys-520–Cys-575. Asn-600 is a glycosylation site (N-linked (GlcNAc...) asparagine). Cystine bridges form between Cys-632-Cys-638, Cys-704-Cys-717, Cys-856-Cys-916, and Cys-905-Cys-911. Residue Asn-710 is glycosylated (N-linked (GlcNAc...) asparagine). An N-linked (GlcNAc...) asparagine glycan is attached at Asn-957. The chain crosses the membrane as a helical span at residues 989 to 1014 (AIPVWWVLVGVLGGLLLLTLLVLAMW). Residues 1015–1033 (KAGFFKRNRPPLEEDEEEE) are Cytoplasmic-facing. The GFFKR motif signature appears at 1017–1021 (GFFKR).

This sequence belongs to the integrin alpha chain family. Heterodimer of an alpha and a beta subunit. The alpha subunit is composed of a heavy and a light chain linked by a disulfide bond. Alpha-IIb associates with beta-3. Directly interacts with RNF181. Interacts (via C-terminus cytoplasmic tail region) with CIB1; the interaction is direct and calcium-dependent. Interacts (via C-terminus cytoplasmic tail region) with CIB2, CIB3 and CIB4; the interactions are stabilized/increased in a calcium and magnesium-dependent manner. ITGA2B:ITGB3 interacts with PPIA/CYPA; the interaction is ROS and PPIase activity-dependent and is increased in the presence of thrombin. ITGA2B:ITGB3 interacts with SELP (via C-type lectin domain); the interaction mediates cell-cell interaction and adhesion. In terms of processing, cleaved by ELANE; the cleavage promotes activation of platelet fibrinogen receptor integrin alpha-IIb/beta-3.

It localises to the membrane. Functionally, integrin alpha-IIb/beta-3 is a receptor for fibronectin, fibrinogen, plasminogen, prothrombin, thrombospondin and vitronectin. It recognizes the sequence R-G-D in a wide array of ligands. It recognizes the sequence H-H-L-G-G-G-A-K-Q-A-G-D-V in fibrinogen gamma chain. Following activation integrin alpha-IIb/beta-3 brings about platelet/platelet interaction through binding of soluble fibrinogen. This step leads to rapid platelet aggregation which physically plugs ruptured endothelial cell surface. In Mus musculus (Mouse), this protein is Integrin alpha-IIb (Itga2b).